Consider the following 195-residue polypeptide: FMN-dependent NADH:quinone oxidoreductase (195 aa).

FMN is bound by residues serine 10, 16–18 (SQS), and 91–94 (MYNF).

Belongs to the azoreductase type 1 family. In terms of assembly, homodimer. The cofactor is FMN.

The enzyme catalyses 2 a quinone + NADH + H(+) = 2 a 1,4-benzosemiquinone + NAD(+). The catalysed reaction is N,N-dimethyl-1,4-phenylenediamine + anthranilate + 2 NAD(+) = 2-(4-dimethylaminophenyl)diazenylbenzoate + 2 NADH + 2 H(+). In terms of biological role, quinone reductase that provides resistance to thiol-specific stress caused by electrophilic quinones. Its function is as follows. Also exhibits azoreductase activity. Catalyzes the reductive cleavage of the azo bond in aromatic azo compounds to the corresponding amines. This is FMN-dependent NADH:quinone oxidoreductase from Aeromonas salmonicida (strain A449).